Reading from the N-terminus, the 641-residue chain is Phosphomethylpyrimidine synthase (641 aa).

Over residues 1 to 12 (MTDTSTQNTATP) the composition is skewed to polar residues. The interval 1–25 (MTDTSTQNTATPTDEYGAEIHPKHS) is disordered. Substrate is bound by residues Asn200, Met229, Tyr258, His294, 314 to 316 (SRG), 355 to 358 (DGLR), and Glu394. Residue His398 participates in Zn(2+) binding. Tyr421 provides a ligand contact to substrate. Position 462 (His462) interacts with Zn(2+). Cys542, Cys545, and Cys550 together coordinate [4Fe-4S] cluster.

Belongs to the ThiC family. It depends on [4Fe-4S] cluster as a cofactor.

It catalyses the reaction 5-amino-1-(5-phospho-beta-D-ribosyl)imidazole + S-adenosyl-L-methionine = 4-amino-2-methyl-5-(phosphooxymethyl)pyrimidine + CO + 5'-deoxyadenosine + formate + L-methionine + 3 H(+). Its pathway is cofactor biosynthesis; thiamine diphosphate biosynthesis. Its function is as follows. Catalyzes the synthesis of the hydroxymethylpyrimidine phosphate (HMP-P) moiety of thiamine from aminoimidazole ribotide (AIR) in a radical S-adenosyl-L-methionine (SAM)-dependent reaction. The protein is Phosphomethylpyrimidine synthase of Corynebacterium jeikeium (strain K411).